Consider the following 324-residue polypeptide: DNA-directed RNA polymerase subunit alpha (324 aa).

Residues 1–228 (MIEFQKPTIR…EHFNLFTDLS (228 aa)) form an alpha N-terminal domain (alpha-NTD) region. The segment at 245–324 (RNKLLDMTIE…STPKEEEEEK (80 aa)) is alpha C-terminal domain (alpha-CTD).

Belongs to the RNA polymerase alpha chain family. In terms of assembly, homodimer. The RNAP catalytic core consists of 2 alpha, 1 beta, 1 beta' and 1 omega subunit. When a sigma factor is associated with the core the holoenzyme is formed, which can initiate transcription.

It catalyses the reaction RNA(n) + a ribonucleoside 5'-triphosphate = RNA(n+1) + diphosphate. Its function is as follows. DNA-dependent RNA polymerase catalyzes the transcription of DNA into RNA using the four ribonucleoside triphosphates as substrates. The chain is DNA-directed RNA polymerase subunit alpha from Caldicellulosiruptor bescii (strain ATCC BAA-1888 / DSM 6725 / KCTC 15123 / Z-1320) (Anaerocellum thermophilum).